A 161-amino-acid chain; its full sequence is Peptidyl-prolyl cis-trans isomerase-like 3 (161 aa).

At Ser-2 the chain carries N-acetylserine. A PPIase cyclophilin-type domain is found at 2 to 154 (SVTLHTDVGD…NDVHIKDITI (153 aa)). Arg-61 is subject to Omega-N-methylarginine.

This sequence belongs to the cyclophilin-type PPIase family. PPIL3 subfamily. Identified in the spliceosome C complex.

It catalyses the reaction [protein]-peptidylproline (omega=180) = [protein]-peptidylproline (omega=0). PPIases accelerate the folding of proteins. It catalyzes the cis-trans isomerization of proline imidic peptide bonds in oligopeptides. May be involved in pre-mRNA splicing. The sequence is that of Peptidyl-prolyl cis-trans isomerase-like 3 (Ppil3) from Mus musculus (Mouse).